A 341-amino-acid polypeptide reads, in one-letter code: Anthranilate phosphoribosyltransferase (341 aa).

Residues glycine 79, 82 to 83 (GD), threonine 87, 89 to 92 (NIST), 107 to 115 (KHGGRSVSS), and serine 119 contribute to the 5-phospho-alpha-D-ribose 1-diphosphate site. Glycine 79 is an anthranilate binding site. Serine 91 contributes to the Mg(2+) binding site. Anthranilate is bound at residue arginine 165. Mg(2+) contacts are provided by aspartate 224 and glutamate 225.

This sequence belongs to the anthranilate phosphoribosyltransferase family. Homodimer. Mg(2+) is required as a cofactor.

The catalysed reaction is N-(5-phospho-beta-D-ribosyl)anthranilate + diphosphate = 5-phospho-alpha-D-ribose 1-diphosphate + anthranilate. Its pathway is amino-acid biosynthesis; L-tryptophan biosynthesis; L-tryptophan from chorismate: step 2/5. In terms of biological role, catalyzes the transfer of the phosphoribosyl group of 5-phosphorylribose-1-pyrophosphate (PRPP) to anthranilate to yield N-(5'-phosphoribosyl)-anthranilate (PRA). The polypeptide is Anthranilate phosphoribosyltransferase (Ruminiclostridium cellulolyticum (strain ATCC 35319 / DSM 5812 / JCM 6584 / H10) (Clostridium cellulolyticum)).